A 200-amino-acid polypeptide reads, in one-letter code: BmK-YA precursor (200 aa).

The signal sequence occupies residues 1–23 (MIFHQFYSILILCLIFPNQVVQS). Residues 24–34 (DKERQDWIPSD) constitute a propeptide that is removed on maturation. The interval 30–200 (WIPSDYGGYM…GYMNPAGRSD (171 aa)) is disordered. At alanine 42 the chain carries Alanine amide. Residues 45 to 100 (SDEERQDWIPSDYGGHMNPAGRSDEERQDWIPSDYGGHMNPAGRSNEERQDWIPSD) constitute a propeptide that is removed on maturation. Alanine 108 is subject to Alanine amide. A propeptide spanning residues 111 to 144 (SDEERQDWIPSDYGGHMNPAGRSNEERQDWIPSD) is cleaved from the precursor. An Alanine amide modification is found at alanine 152. Residues 155-188 (SDEERQDWIPSDYGGHMNPAGRSDEERQDWIPSD) constitute a propeptide that is removed on maturation. Alanine 196 carries the post-translational modification Alanine amide. A propeptide spanning residues 199-200 (SD) is cleaved from the precursor.

As to expression, venom gland.

The protein resides in the secreted. Functionally, synthetic BmK-YA activates human opioid receptors in vitro, with highest activity on the delta-type/OPRD1 receptor (EC(50)=2.5 uM) and lower activity on mu-type/OPRM1 and kappa-type/OPRK1 receptors (EC(50)=17 uM and 30 uM, respectively). The sequence is that of BmK-YA precursor from Olivierus martensii (Manchurian scorpion).